The primary structure comprises 128 residues: Glycine cleavage system H protein (128 aa).

A Lipoyl-binding domain is found at 22-104 (TALVGVTDYA…YASGWLVKIK (83 aa)). K63 bears the N6-lipoyllysine mark.

This sequence belongs to the GcvH family. As to quaternary structure, the glycine cleavage system is composed of four proteins: P, T, L and H. It depends on (R)-lipoate as a cofactor.

Its function is as follows. The glycine cleavage system catalyzes the degradation of glycine. The H protein shuttles the methylamine group of glycine from the P protein to the T protein. This Halothermothrix orenii (strain H 168 / OCM 544 / DSM 9562) protein is Glycine cleavage system H protein.